The following is a 430-amino-acid chain: Glutamate-1-semialdehyde 2,1-aminomutase (430 aa).

Position 267 is an N6-(pyridoxal phosphate)lysine (Lys267).

The protein belongs to the class-III pyridoxal-phosphate-dependent aminotransferase family. HemL subfamily. As to quaternary structure, homodimer. Pyridoxal 5'-phosphate serves as cofactor.

The protein resides in the cytoplasm. The catalysed reaction is (S)-4-amino-5-oxopentanoate = 5-aminolevulinate. It functions in the pathway porphyrin-containing compound metabolism; protoporphyrin-IX biosynthesis; 5-aminolevulinate from L-glutamyl-tRNA(Glu): step 2/2. This Desulfotalea psychrophila (strain LSv54 / DSM 12343) protein is Glutamate-1-semialdehyde 2,1-aminomutase.